The chain runs to 313 residues: Probable WRKY transcription factor 41 (313 aa).

Residues 135–203 constitute a DNA-binding region (WRKY); the sequence is GLEGPHDDIF…YRGTHTCSQG (69 aa).

This sequence belongs to the WRKY group III family.

Its subcellular location is the nucleus. In terms of biological role, transcription factor. Interacts specifically with the W box (5'-(T)TGAC[CT]-3'), a frequently occurring elicitor-responsive cis-acting element. The chain is Probable WRKY transcription factor 41 (WRKY41) from Arabidopsis thaliana (Mouse-ear cress).